The chain runs to 91 residues: Large ribosomal subunit protein uL23c (91 aa).

The protein belongs to the universal ribosomal protein uL23 family. In terms of assembly, part of the 50S ribosomal subunit.

It localises to the plastid. The protein resides in the chloroplast. Its function is as follows. Binds to 23S rRNA. The chain is Large ribosomal subunit protein uL23c (rpl23) from Physcomitrium patens (Spreading-leaved earth moss).